Consider the following 174-residue polypeptide: Neuromedin-U (174 aa).

The signal sequence occupies residues Met-1–Ala-37. Positions Cys-38–Arg-105 are excised as a propeptide. A Methionine sulfoxide; partial modification is found at Met-141. Asn-166 is modified (asparagine amide). Positions Ser-170–Ile-174 are excised as a propeptide.

The protein belongs to the NmU family. Expressed throughout the gastrointestinal tract with highest levels in the duodenum and jejunum. Low levels in spinal cord, hypothalamus, and stomach. Neuromedin-U-23: Expressed in the small intestine and the pituitary gland (at protein level). Neuromedin precursor-related peptides: Expressed in pituitary gland and small intestine (at protein level).

It is found in the secreted. In terms of biological role, ligand for receptors NMUR1 and NMUR2. Receptor-binding is very tight if not irreversible and triggers an increase in the cytosolic Ca(2+) concentration. Stimulates muscle contractions of specific regions of the gastrointestinal tract. In rat, NMU stimulates contractions of stomach circular muscle. Functionally, does not function as a ligand for either NMUR1 or NMUR2. Indirectly induces prolactin release although its potency is much lower than that of neuromedin precursor-related peptide 36. Does not function as a ligand for either NMUR1 or NMUR2. Indirectly induces prolactin release from lactotroph cells in the pituitary gland, probably via the hypothalamic dopaminergic system. The chain is Neuromedin-U (Nmu) from Rattus norvegicus (Rat).